Reading from the N-terminus, the 192-residue chain is Xanthine phosphoribosyltransferase (192 aa).

Positions 20 and 27 each coordinate xanthine. Position 128–132 (128–132) interacts with 5-phospho-alpha-D-ribose 1-diphosphate; that stretch reads ANGQA. Xanthine is bound at residue Lys-156.

This sequence belongs to the purine/pyrimidine phosphoribosyltransferase family. Xpt subfamily. In terms of assembly, homodimer.

It is found in the cytoplasm. It catalyses the reaction XMP + diphosphate = xanthine + 5-phospho-alpha-D-ribose 1-diphosphate. It participates in purine metabolism; XMP biosynthesis via salvage pathway; XMP from xanthine: step 1/1. Converts the preformed base xanthine, a product of nucleic acid breakdown, to xanthosine 5'-monophosphate (XMP), so it can be reused for RNA or DNA synthesis. In Ligilactobacillus salivarius (strain UCC118) (Lactobacillus salivarius), this protein is Xanthine phosphoribosyltransferase.